The sequence spans 217 residues: Uracil-DNA glycosylase (217 aa).

Asp-62 serves as the catalytic Proton acceptor.

The protein belongs to the uracil-DNA glycosylase (UDG) superfamily. UNG family.

It is found in the cytoplasm. The catalysed reaction is Hydrolyzes single-stranded DNA or mismatched double-stranded DNA and polynucleotides, releasing free uracil.. Excises uracil residues from the DNA which can arise as a result of misincorporation of dUMP residues by DNA polymerase or due to deamination of cytosine. The sequence is that of Uracil-DNA glycosylase from Streptococcus equi subsp. zooepidemicus (strain H70).